The following is a 182-amino-acid chain: Protein Syd (182 aa).

The protein belongs to the Syd family.

It localises to the cell inner membrane. Functionally, interacts with the SecY protein in vivo. May bind preferentially to an uncomplexed state of SecY, thus functioning either as a chelating agent for excess SecY in the cell or as a regulatory factor that negatively controls the translocase function. This Pectobacterium atrosepticum (strain SCRI 1043 / ATCC BAA-672) (Erwinia carotovora subsp. atroseptica) protein is Protein Syd.